The following is a 190-amino-acid chain: Protein GrpE (190 aa).

Positions 1 to 11 (MSNQDEPQNSP) are enriched in polar residues. Residues 1-36 (MSNQDEPQNSPEEFAEDQQADVALEEASSDSSETAA) form a disordered region. Residues 13–28 (EFAEDQQADVALEEAS) show a composition bias toward acidic residues.

It belongs to the GrpE family. As to quaternary structure, homodimer.

It localises to the cytoplasm. Its function is as follows. Participates actively in the response to hyperosmotic and heat shock by preventing the aggregation of stress-denatured proteins, in association with DnaK and GrpE. It is the nucleotide exchange factor for DnaK and may function as a thermosensor. Unfolded proteins bind initially to DnaJ; upon interaction with the DnaJ-bound protein, DnaK hydrolyzes its bound ATP, resulting in the formation of a stable complex. GrpE releases ADP from DnaK; ATP binding to DnaK triggers the release of the substrate protein, thus completing the reaction cycle. Several rounds of ATP-dependent interactions between DnaJ, DnaK and GrpE are required for fully efficient folding. This Teredinibacter turnerae (strain ATCC 39867 / T7901) protein is Protein GrpE.